The primary structure comprises 482 residues: Proline--tRNA ligase (482 aa).

The protein belongs to the class-II aminoacyl-tRNA synthetase family. ProS type 3 subfamily. As to quaternary structure, homodimer.

It localises to the cytoplasm. The catalysed reaction is tRNA(Pro) + L-proline + ATP = L-prolyl-tRNA(Pro) + AMP + diphosphate. Its function is as follows. Catalyzes the attachment of proline to tRNA(Pro) in a two-step reaction: proline is first activated by ATP to form Pro-AMP and then transferred to the acceptor end of tRNA(Pro). The sequence is that of Proline--tRNA ligase from Mycoplasmopsis synoviae (strain 53) (Mycoplasma synoviae).